Here is a 371-residue protein sequence, read N- to C-terminus: Archaeal glycosylation protein Q (371 aa).

The tract at residues 19-39 is disordered; sequence QRSDGSMPAGHNGPYHDPETP.

The protein localises to the cytoplasm. Its pathway is cell surface structure biogenesis; S-layer biogenesis. Functionally, putative isomerase involved in the N-glycosylation pathway. Required for the appearance of the methyl ester of hexuronic acid found at position four of the pentasaccharide N-linked to the S-layer glycoprotein. Either involved in preparing the third sugar for attachment of the fourth pentasaccharide subunit or processing the fourth sugar prior to its addition to the lipid-linked trisaccharide. The polypeptide is Archaeal glycosylation protein Q (aglQ) (Haloferax volcanii (strain ATCC 29605 / DSM 3757 / JCM 8879 / NBRC 14742 / NCIMB 2012 / VKM B-1768 / DS2) (Halobacterium volcanii)).